We begin with the raw amino-acid sequence, 461 residues long: Cysteine--tRNA ligase (461 aa).

Residue Cys28 coordinates Zn(2+). The 'HIGH' region motif lies at 30–40 (ITVYDLCHIGH). Positions 209, 234, and 238 each coordinate Zn(2+). The 'KMSKS' region motif lies at 266–270 (KMSKS). Residue Lys269 coordinates ATP.

The protein belongs to the class-I aminoacyl-tRNA synthetase family. In terms of assembly, monomer. Requires Zn(2+) as cofactor.

Its subcellular location is the cytoplasm. It carries out the reaction tRNA(Cys) + L-cysteine + ATP = L-cysteinyl-tRNA(Cys) + AMP + diphosphate. This is Cysteine--tRNA ligase from Escherichia coli (strain SMS-3-5 / SECEC).